We begin with the raw amino-acid sequence, 441 residues long: Nuclear distribution protein nudF (441 aa).

A LisH domain is found at 9 to 41 (QAEELHKSIIAYLASVNLTESSAALRAELGDSV). WD repeat units follow at residues 87–128 (GHRE…RTVK), 130–170 (HTKA…KNIR), 174–221 (GHDH…CVKT), 224–263 (GHVDWVRAVAPSLDGRFLFAAGDDRIPRLWDLSSAETKST), 266–326 (GHEH…IKTL), 328–367 (GHDNWVRALAFHPGGKHLLSVADDKTIRCWDLTQECKCVR), 372–402 (AHGHFVTCLRWAPPLIKDGGANGESETNGAP), and 403–440 (AATATTNGVRPDPNAANKISIRCVIATGSVDRKVRIFA). The tract at residues 390 to 415 (GGANGESETNGAPAATATTNGVRPDP) is disordered. Residues 398–410 (TNGAPAATATTNG) show a composition bias toward low complexity.

Belongs to the WD repeat LIS1/nudF family. Self-associates. Interacts with nudE and dynein.

The protein localises to the cytoplasm. The protein resides in the cytoskeleton. Its subcellular location is the spindle pole. In terms of biological role, positively regulates the activity of the minus-end directed microtubule motor protein dynein. May enhance dynein-mediated microtubule sliding by targeting dynein to the microtubule plus end. Required for nuclear migration during vegetative growth as well as development. Required for retrograde early endosome (EE) transport from the hyphal tip. Required for localization of dynein to the mitotic spindle poles. Recruits additional proteins to the dynein complex at SPBs. The chain is Nuclear distribution protein nudF from Neosartorya fischeri (strain ATCC 1020 / DSM 3700 / CBS 544.65 / FGSC A1164 / JCM 1740 / NRRL 181 / WB 181) (Aspergillus fischerianus).